Reading from the N-terminus, the 88-residue chain is UPF0335 protein NGR_c28390 (88 aa).

Belongs to the UPF0335 family.

The chain is UPF0335 protein NGR_c28390 from Sinorhizobium fredii (strain NBRC 101917 / NGR234).